A 559-amino-acid chain; its full sequence is MRRLSSWRKMATAEKQKHDGRVKIGHYILGDTLGVGTFGKVKVGKHELTGHKVAVKILNRQKIRSLDVVGKIRREIQNLKLFRHPHIIKLYQVISTPSDIFMVMEYVSGGELFDYICKNGRLDEKESRRLFQQILSGVDYCHRHMVVHRDLKPENVLLDAHMNAKIADFGLSNMMSDGEFLRTSCGSPNYAAPEVISGRLYAGPEVDIWSSGVILYALLCGTLPFDDDHVPTLFKKICDGIFYTPQYLNPSVISLLKHMLQVDPMKRAAIKDIREHEWFKQDLPKYLFPEDPSYSSTMIDDEALKEVCEKFECSEEEVLSCLYNRNHQDPLAVAYHLIIDNRRIMNEAKDFYLATSPPDSFLDDHHLTRPHPERVPFLVAETPRARHTLDELNPQKSKHQGVRKAKWHLGIRSQSRPNDIMAEVCRAIKQLDYEWKVVNPYYLRVRRKNPVTSTFSKMSLQLYQVDSRTYLLDFRSIDDEITEAKSGTATPQRSGSISNYRSCQRSDSDAEAQGKPSDVSLTSSVTSLDSSPVDVAPRPGSHTIEFFEMCANLIKILAQ.

The Protein kinase domain maps to 27–279 (YILGDTLGVG…IKDIREHEWF (253 aa)). A Phosphothreonine modification is found at T32. ATP is bound by residues 33–41 (LGVGTFGKV) and K56. Residue D150 is the Proton acceptor of the active site. At T183 the chain carries Phosphothreonine; by LKB1 and CaMKK2. Residues 302 to 381 (EALKEVCEKF…PERVPFLVAE (80 aa)) are AIS. Position 355 is a phosphothreonine (T355). Residue S356 is modified to Phosphoserine. Phosphoserine; by ULK1 is present on S360. T368 is modified (phosphothreonine; by ULK1). T382 bears the Phosphothreonine mark. S397 carries the phosphoserine; by ULK1 modification. A phosphoserine mark is found at S467 and S486. The span at 485–505 (KSGTATPQRSGSISNYRSCQR) shows a compositional bias: polar residues. The tract at residues 485 to 536 (KSGTATPQRSGSISNYRSCQRSDSDAEAQGKPSDVSLTSSVTSLDSSPVDVA) is disordered. The residue at position 488 (T488) is a Phosphothreonine; by ULK1. T490 is modified (phosphothreonine). Phosphoserine occurs at positions 496, 508, 524, and 527. The segment covering 516 to 535 (PSDVSLTSSVTSLDSSPVDV) has biased composition (low complexity).

This sequence belongs to the protein kinase superfamily. CAMK Ser/Thr protein kinase family. SNF1 subfamily. AMPK is a heterotrimer of an alpha catalytic subunit (PRKAA1 or PRKAA2), a beta (PRKAB1 or PRKAB2) and a gamma non-catalytic subunits (PRKAG1, PRKAG2 or PRKAG3). Interacts with FNIP1 and FNIP2. It depends on Mg(2+) as a cofactor. Post-translationally, phosphorylated at Thr-183 by STK11/LKB1 in complex with STE20-related adapter-alpha (STRADA) pseudo kinase and CAB39. Also phosphorylated at Thr-183 by CAMKK2; triggered by a rise in intracellular calcium ions, without detectable changes in the AMP/ATP ratio. CAMKK1 can also phosphorylate Thr-183, but at a much lower level. Dephosphorylated by protein phosphatase 2A and 2C (PP2A and PP2C). Phosphorylated by ULK1 and ULK2; leading to negatively regulate AMPK activity and suggesting the existence of a regulatory feedback loop between ULK1, ULK2 and AMPK. Dephosphorylated by PPM1A and PPM1B. Ubiquitinated. In terms of processing, glycosylated; O-GlcNAcylated by OGT, promoting the AMP-activated protein kinase (AMPK) activity.

Its subcellular location is the cytoplasm. The protein localises to the nucleus. The enzyme catalyses L-seryl-[protein] + ATP = O-phospho-L-seryl-[protein] + ADP + H(+). It carries out the reaction L-threonyl-[protein] + ATP = O-phospho-L-threonyl-[protein] + ADP + H(+). It catalyses the reaction L-seryl-[acetyl-CoA carboxylase] + ATP = O-phospho-L-seryl-[acetyl-CoA carboxylase] + ADP + H(+). The catalysed reaction is L-seryl-[3-hydroxy-3-methylglutaryl-coenzyme A reductase] + ATP = O-phospho-L-seryl-[3-hydroxy-3-methylglutaryl-coenzyme A reductase] + ADP + H(+). The enzyme catalyses L-seryl-[tau protein] + ATP = O-phospho-L-seryl-[tau protein] + ADP + H(+). It carries out the reaction L-threonyl-[tau protein] + ATP = O-phospho-L-threonyl-[tau protein] + ADP + H(+). Activated by phosphorylation on Thr-183. Binding of AMP to non-catalytic gamma subunit (PRKAG1, PRKAG2 or PRKAG3) results in allosteric activation, inducing phosphorylation on Thr-183. AMP-binding to gamma subunit also sustains activity by preventing dephosphorylation of Thr-183. ADP also stimulates Thr-183 phosphorylation, without stimulating already phosphorylated AMPK. ATP promotes dephosphorylation of Thr-183, rendering the enzyme inactive. Under physiological conditions AMPK mainly exists in its inactive form in complex with ATP, which is much more abundant than AMP. Selectively inhibited by compound C (6-[4-(2-Piperidin-1-yl-ethoxy)-phenyl)]-3-pyridin-4-yl-pyyrazolo[1,5-a] pyrimidine. Activated by resveratrol, a natural polyphenol present in red wine, and S17834, a synthetic polyphenol. Catalytic subunit of AMP-activated protein kinase (AMPK), an energy sensor protein kinase that plays a key role in regulating cellular energy metabolism. In response to reduction of intracellular ATP levels, AMPK activates energy-producing pathways and inhibits energy-consuming processes: inhibits protein, carbohydrate and lipid biosynthesis, as well as cell growth and proliferation. AMPK acts via direct phosphorylation of metabolic enzymes, and by longer-term effects via phosphorylation of transcription regulators. Regulates lipid synthesis by phosphorylating and inactivating lipid metabolic enzymes such as ACACA, ACACB, GYS1, HMGCR and LIPE; regulates fatty acid and cholesterol synthesis by phosphorylating acetyl-CoA carboxylase (ACACA and ACACB) and hormone-sensitive lipase (LIPE) enzymes, respectively. Promotes lipolysis of lipid droplets by mediating phosphorylation of isoform 1 of CHKA (CHKalpha2). Regulates insulin-signaling and glycolysis by phosphorylating IRS1, PFKFB2 and PFKFB3. AMPK stimulates glucose uptake in muscle by increasing the translocation of the glucose transporter SLC2A4/GLUT4 to the plasma membrane, possibly by mediating phosphorylation of TBC1D4/AS160. Regulates transcription and chromatin structure by phosphorylating transcription regulators involved in energy metabolism such as CRTC2/TORC2, FOXO3, histone H2B, HDAC5, MEF2C, MLXIPL/ChREBP, EP300, HNF4A, p53/TP53, SREBF1, SREBF2 and PPARGC1A. Acts as a key regulator of glucose homeostasis in liver by phosphorylating CRTC2/TORC2, leading to CRTC2/TORC2 sequestration in the cytoplasm. In response to stress, phosphorylates 'Ser-36' of histone H2B (H2BS36ph), leading to promote transcription. Acts as a key regulator of cell growth and proliferation by phosphorylating FNIP1, TSC2, RPTOR, WDR24 and ATG1/ULK1: in response to nutrient limitation, negatively regulates the mTORC1 complex by phosphorylating RPTOR component of the mTORC1 complex and by phosphorylating and activating TSC2. Also phosphorylates and inhibits GATOR2 subunit WDR24 in response to nutrient limitation, leading to suppress glucose-mediated mTORC1 activation. In response to energetic stress, phosphorylates FNIP1, inactivating the non-canonical mTORC1 signaling, thereby promoting nuclear translocation of TFEB and TFE3, and inducing transcription of lysosomal or autophagy genes. In response to nutrient limitation, promotes autophagy by phosphorylating and activating ATG1/ULK1. In that process, it also activates WDR45/WIPI4. Phosphorylates CASP6, thereby preventing its autoprocessing and subsequent activation. In response to nutrient limitation, phosphorylates transcription factor FOXO3 promoting FOXO3 mitochondrial import. Also acts as a regulator of cellular polarity by remodeling the actin cytoskeleton; probably by indirectly activating myosin. AMPK also acts as a regulator of circadian rhythm by mediating phosphorylation of CRY1, leading to destabilize it. May regulate the Wnt signaling pathway by phosphorylating CTNNB1, leading to stabilize it. Also has tau-protein kinase activity: in response to amyloid beta A4 protein (APP) exposure, activated by CAMKK2, leading to phosphorylation of MAPT/TAU; however the relevance of such data remains unclear in vivo. Also phosphorylates CFTR, EEF2K, KLC1, NOS3 and SLC12A1. Regulates hepatic lipogenesis. Activated via SIRT3, represses sterol regulatory element-binding protein (SREBP) transcriptional activities and ATP-consuming lipogenesis to restore cellular energy balance. Upon stress, regulates mitochondrial fragmentation through phosphorylation of MTFR1L. The polypeptide is 5'-AMP-activated protein kinase catalytic subunit alpha-1 (Prkaa1) (Mus musculus (Mouse)).